The primary structure comprises 155 residues: SsrA-binding protein (155 aa).

The tract at residues 135–155 is disordered; it reads KRQDIKQRDVERETRREIMRH.

This sequence belongs to the SmpB family.

The protein localises to the cytoplasm. In terms of biological role, required for rescue of stalled ribosomes mediated by trans-translation. Binds to transfer-messenger RNA (tmRNA), required for stable association of tmRNA with ribosomes. tmRNA and SmpB together mimic tRNA shape, replacing the anticodon stem-loop with SmpB. tmRNA is encoded by the ssrA gene; the 2 termini fold to resemble tRNA(Ala) and it encodes a 'tag peptide', a short internal open reading frame. During trans-translation Ala-aminoacylated tmRNA acts like a tRNA, entering the A-site of stalled ribosomes, displacing the stalled mRNA. The ribosome then switches to translate the ORF on the tmRNA; the nascent peptide is terminated with the 'tag peptide' encoded by the tmRNA and targeted for degradation. The ribosome is freed to recommence translation, which seems to be the essential function of trans-translation. This Oleidesulfovibrio alaskensis (strain ATCC BAA-1058 / DSM 17464 / G20) (Desulfovibrio alaskensis) protein is SsrA-binding protein.